The primary structure comprises 668 residues: L-type lectin-domain containing receptor kinase I.7 (668 aa).

The first 21 residues, 1–21, serve as a signal peptide directing secretion; sequence MIRGLLLGIIWMIFCVCSSFQ. The Extracellular segment spans residues 22–285; sequence QETPFVYNNF…SSTKKKSTSP (264 aa). Positions 24–256 are legume-lectin like; it reads TPFVYNNFGH…YQYILGWSFS (233 aa). Asparagine 56, asparagine 125, asparagine 167, asparagine 201, and asparagine 223 each carry an N-linked (GlcNAc...) asparagine glycan. A helical membrane pass occupies residues 286-306; sequence VLSVLLGLIAFIVLGILVVAY. Over 307-668 the chain is Cytoplasmic; it reads LYRRNLYSEV…THSVLYGSGR (362 aa). Residues 341-620 form the Protein kinase domain; sequence FNRSEFLGRG…LNGNLALPEF (280 aa). ATP is bound by residues 347-355 and lysine 372; that span reads LGRGGFGEV. The Proton acceptor role is filled by aspartate 468.

This sequence in the C-terminal section; belongs to the protein kinase superfamily. Ser/Thr protein kinase family. In the N-terminal section; belongs to the leguminous lectin family.

The protein resides in the cell membrane. It catalyses the reaction L-seryl-[protein] + ATP = O-phospho-L-seryl-[protein] + ADP + H(+). The catalysed reaction is L-threonyl-[protein] + ATP = O-phospho-L-threonyl-[protein] + ADP + H(+). Functionally, involved in resistance response to the pathogenic oomycetes Phytophthora infestans and Phytophthora capsici. The sequence is that of L-type lectin-domain containing receptor kinase I.7 from Arabidopsis thaliana (Mouse-ear cress).